The chain runs to 417 residues: Gamma-glutamyl phosphate reductase (417 aa).

It belongs to the gamma-glutamyl phosphate reductase family.

Its subcellular location is the cytoplasm. It carries out the reaction L-glutamate 5-semialdehyde + phosphate + NADP(+) = L-glutamyl 5-phosphate + NADPH + H(+). It functions in the pathway amino-acid biosynthesis; L-proline biosynthesis; L-glutamate 5-semialdehyde from L-glutamate: step 2/2. Its function is as follows. Catalyzes the NADPH-dependent reduction of L-glutamate 5-phosphate into L-glutamate 5-semialdehyde and phosphate. The product spontaneously undergoes cyclization to form 1-pyrroline-5-carboxylate. This is Gamma-glutamyl phosphate reductase from Legionella pneumophila (strain Lens).